The sequence spans 252 residues: Type II secretion system protein N (252 aa).

Residues 1–4 (MKNR) are Cytoplasmic-facing. A helical membrane pass occupies residues 5 to 25 (LTIGLLLAAIYLFWLLLSAPA). The Periplasmic segment spans residues 26-252 (RLLALTLSDD…QGEWLSEEKK (227 aa)).

Belongs to the GSP N family.

It is found in the cell inner membrane. Its function is as follows. Involved in a type II secretion system (T2SS, formerly general secretion pathway, GSP) for the export of proteins. Required for the translocation of pullulanase. In Klebsiella pneumoniae, this protein is Type II secretion system protein N (pulN).